The following is a 221-amino-acid chain: Protein lethal(2)k10201 (221 aa).

2 consecutive C2H2-type zinc fingers follow at residues 74 to 97 (YSCV…TEQH) and 113 to 138 (FSCF…IITH). A disordered region spans residues 146–168 (FDHSKNRGKQKHQGKSKPNSMEV). Basic residues predominate over residues 151-160 (NRGKQKHQGK).

Vital for development. This chain is Protein lethal(2)k10201 (l(2)k10201), found in Drosophila melanogaster (Fruit fly).